A 281-amino-acid chain; its full sequence is Diaminopimelate epimerase (281 aa).

Positions 14 and 65 each coordinate substrate. The active-site Proton donor is the cysteine 74. Residues 75–76 (GN), asparagine 165, asparagine 198, and 216–217 (ER) each bind substrate. Cysteine 225 serves as the catalytic Proton acceptor. 226–227 (GT) contacts substrate.

The protein belongs to the diaminopimelate epimerase family. As to quaternary structure, homodimer.

The protein resides in the cytoplasm. It carries out the reaction (2S,6S)-2,6-diaminopimelate = meso-2,6-diaminopimelate. It participates in amino-acid biosynthesis; L-lysine biosynthesis via DAP pathway; DL-2,6-diaminopimelate from LL-2,6-diaminopimelate: step 1/1. Catalyzes the stereoinversion of LL-2,6-diaminopimelate (L,L-DAP) to meso-diaminopimelate (meso-DAP), a precursor of L-lysine and an essential component of the bacterial peptidoglycan. This is Diaminopimelate epimerase from Leptospira borgpetersenii serovar Hardjo-bovis (strain JB197).